We begin with the raw amino-acid sequence, 368 residues long: 3-dehydroquinate synthase (368 aa).

Residues 131 to 132 (TT), Lys-144, and Lys-153 each bind NAD(+). The Zn(2+) site is built by Glu-186, His-249, and His-267.

This sequence belongs to the sugar phosphate cyclases superfamily. Dehydroquinate synthase family. It depends on Co(2+) as a cofactor. The cofactor is Zn(2+). Requires NAD(+) as cofactor.

It is found in the cytoplasm. The catalysed reaction is 7-phospho-2-dehydro-3-deoxy-D-arabino-heptonate = 3-dehydroquinate + phosphate. The protein operates within metabolic intermediate biosynthesis; chorismate biosynthesis; chorismate from D-erythrose 4-phosphate and phosphoenolpyruvate: step 2/7. Its function is as follows. Catalyzes the conversion of 3-deoxy-D-arabino-heptulosonate 7-phosphate (DAHP) to dehydroquinate (DHQ). The protein is 3-dehydroquinate synthase of Pelagibacter ubique (strain HTCC1062).